We begin with the raw amino-acid sequence, 1080 residues long: Putative bifunctional amine oxidase DDB_G0291301 (1080 aa).

Residues 1-450 (MREFLKDDYD…TIAKSTVPTN (450 aa)) form a putative sarcosine oxidase region. An FAD-binding site is contributed by 10-40 (DVIVCGGGPVGLATAYRCAKAGKKVLCLEKS). A disordered region spans residues 445–464 (STVPTNQSSNPDGASSTAPT). The tract at residues 450 to 1080 (NQSSNPDGAS…NTAASIGGLK (631 aa)) is putative L-amino-acid oxidase. A helical transmembrane segment spans residues 508-528 (VGIIGAGMAGLYAAMILQDLG). FAD-binding positions include Glu535, Arg544, and 563 to 564 (GA). Tyr886 lines the substrate pocket. Residues Glu978 and 987–990 (VIGS) each bind FAD.

This sequence in the N-terminal section; belongs to the MSOX/MTOX family. It in the C-terminal section; belongs to the flavin monoamine oxidase family. FAD is required as a cofactor.

It localises to the membrane. It catalyses the reaction sarcosine + O2 + H2O = formaldehyde + glycine + H2O2. The enzyme catalyses L-pipecolate + O2 = L-1-piperideine-6-carboxylate + H2O2 + H(+). It carries out the reaction an L-alpha-amino acid + O2 + H2O = a 2-oxocarboxylate + H2O2 + NH4(+). Functionally, catalyzes an oxidative deamination of predominantly hydrophobic and aromatic L-amino acids. Metabolizes sarcosine, L-pipecolic acid and L-proline. The chain is Putative bifunctional amine oxidase DDB_G0291301 from Dictyostelium discoideum (Social amoeba).